The primary structure comprises 234 residues: 2-C-methyl-D-erythritol 4-phosphate cytidylyltransferase (234 aa).

This sequence belongs to the IspD/TarI cytidylyltransferase family. IspD subfamily.

The enzyme catalyses 2-C-methyl-D-erythritol 4-phosphate + CTP + H(+) = 4-CDP-2-C-methyl-D-erythritol + diphosphate. Its pathway is isoprenoid biosynthesis; isopentenyl diphosphate biosynthesis via DXP pathway; isopentenyl diphosphate from 1-deoxy-D-xylulose 5-phosphate: step 2/6. Functionally, catalyzes the formation of 4-diphosphocytidyl-2-C-methyl-D-erythritol from CTP and 2-C-methyl-D-erythritol 4-phosphate (MEP). The protein is 2-C-methyl-D-erythritol 4-phosphate cytidylyltransferase of Shewanella sediminis (strain HAW-EB3).